Here is a 434-residue protein sequence, read N- to C-terminus: Nuclear receptor subfamily 1 group I member 2 (434 aa).

The nuclear receptor DNA-binding region spans 38–107; the sequence is PQICRVCGDK…RLRKCLESGM (70 aa). NR C4-type zinc fingers lie at residues 41–61 and 77–102; these read CRVC…CEGC and CPFR…LRKC. Residues 66-92 carry the Bipartite nuclear localization signal motif; it reads RRAMKRNARLRCPFRKGACEITRKTRR. The tract at residues 108–145 is hinge; sequence KKEMIMSDEAVEERRALIKRKKSERTGTQPLGVQGLTE. Residues 146–433 enclose the NR LBD domain; that stretch reads EQRMMIRELM…LMQELFGITG (288 aa). Hyperforin is bound by residues serine 247, 285–288, and histidine 407; that span reads QLRF.

Belongs to the nuclear hormone receptor family. NR1 subfamily. As to quaternary structure, heterodimer with RXR. Interacts with NCOA1. Interacts (via domain NR LBD) with CRY1 and CRY2 in a ligand-dependent manner. Expressed in liver, colon and small intestine.

It is found in the nucleus. Nuclear receptor that binds and is activated by variety of endogenous and xenobiotic compounds. Transcription factor that activates the transcription of multiple genes involved in the metabolism and secretion of potentially harmful xenobiotics, drugs and endogenous compounds. Activated by the antibiotic rifampicin and various plant metabolites, such as hyperforin, guggulipid, colupulone, and isoflavones. Response to specific ligands is species-specific. Activated by naturally occurring steroids, such as pregnenolone and progesterone. Binds to a response element in the promoters of the CYP3A4 and ABCB1/MDR1 genes. The polypeptide is Nuclear receptor subfamily 1 group I member 2 (NR1I2) (Homo sapiens (Human)).